The chain runs to 276 residues: MHFHFSKMHGLGNDFMVVDCITQNVFFSQDLIRRLADRHTGVGFDQLLVVEAPYDPETDFHYRIFNADGSEVEQCGNGARCFARFVRLKGLTNRYSISVSTKKGKMILDVEDDGEVTVNMGVPEFEPNKIPFKAKQKEKTYIMRAGDKTLFCGAVSMGNPHVVTVVDDVDTAEVETLGPLLESHERFPERVNAGFMQVVNRNHIRLRVYERGAGETQACGSGACGAVAVGILQGLLDENVKVSLPGGDLRISWQGPGKPLFMTGPATHVFDGQLSC.

Residues N13, Q46, and N66 each contribute to the substrate site. C75 (proton donor) is an active-site residue. Substrate is bound by residues 76–77, N159, N192, and 210–211; these read GN and ER. C219 (proton acceptor) is an active-site residue. Residue 220–221 coordinates substrate; it reads GS.

Belongs to the diaminopimelate epimerase family. In terms of assembly, homodimer.

It localises to the cytoplasm. The enzyme catalyses (2S,6S)-2,6-diaminopimelate = meso-2,6-diaminopimelate. The protein operates within amino-acid biosynthesis; L-lysine biosynthesis via DAP pathway; DL-2,6-diaminopimelate from LL-2,6-diaminopimelate: step 1/1. Catalyzes the stereoinversion of LL-2,6-diaminopimelate (L,L-DAP) to meso-diaminopimelate (meso-DAP), a precursor of L-lysine and an essential component of the bacterial peptidoglycan. The protein is Diaminopimelate epimerase of Vibrio campbellii (strain ATCC BAA-1116).